The following is a 300-amino-acid chain: uncharacterized protein (300 aa).

CBS domains are found at residues 10–68, 88–148, 152–207, and 226–284; these read RFPP…FRDV, FLKY…HVKV, MTSE…EDVL, and ISSK…GVEI.

This is an uncharacterized protein from Thermofilum pendens.